The sequence spans 260 residues: Meiotic recombination protein rec6 (260 aa).

Positions 197 to 222 are disordered; the sequence is QYSESSLLDDSQLLCSSPPVDSTEEA. A compositionally biased stretch (low complexity) spans 199–213; the sequence is SESSLLDDSQLLCSS.

The protein belongs to the TOP6B-like family. Component of the DSB catalytic core (DSBC) complex, composed of at least rec12, rec6 and rec14. The complex interacts with mde2.

In terms of biological role, required for formation of the rec12-mediated double-strand breaks (DSBs) that initiate meiotic recombination. May be involved primarily in the early steps of meiotic recombination. In Schizosaccharomyces pombe (strain 972 / ATCC 24843) (Fission yeast), this protein is Meiotic recombination protein rec6.